We begin with the raw amino-acid sequence, 117 residues long: Large ribosomal subunit protein bL20c (117 aa).

Belongs to the bacterial ribosomal protein bL20 family.

The protein resides in the plastid. The protein localises to the chloroplast. Binds directly to 23S ribosomal RNA and is necessary for the in vitro assembly process of the 50S ribosomal subunit. It is not involved in the protein synthesizing functions of that subunit. This Vitis vinifera (Grape) protein is Large ribosomal subunit protein bL20c.